The chain runs to 386 residues: Patatin-07 (386 aa).

An N-terminal signal peptide occupies residues 1 to 23 (MATTKSFLILFFMILATTSSTCA). In terms of domain architecture, PNPLA spans 32–229 (LSIDGGGIKG…TVADPALLSV (198 aa)). The short motif at 36 to 41 (GGGIKG) is the GXGXXG element. The GXSXG motif lies at 75 to 79 (GTSTG). S77 serves as the catalytic Nucleophile. N-linked (GlcNAc...) asparagine glycosylation is found at N115 and N202. Catalysis depends on D215, which acts as the Proton acceptor. The DGA/G motif lies at 215 to 217 (DGA).

Belongs to the patatin family. Tuber.

The protein localises to the vacuole. In terms of biological role, probable lipolytic acyl hydrolase (LAH), an activity which is thought to be involved in the response of tubers to pathogens. In Solanum tuberosum (Potato), this protein is Patatin-07.